Here is a 342-residue protein sequence, read N- to C-terminus: Immune-associated nucleotide-binding protein 9 (342 aa).

Residues 22–229 enclose the AIG1-type G domain; the sequence is NPKRTLVLVG…YSDELFHELQ (208 aa). The tract at residues 31–38 is G1; that stretch reads GRTGNGKS. GTP contacts are provided by residues 31-39 and Ser-52; that span reads GRTGNGKSA. Residues 58–62 are G2; it reads GVTST. Residues 80 to 83 are G3; sequence DTPG. A G4 region spans residues 149–152; it reads TGGD. Residues 188–190 form a G5 region; that stretch reads NNK. Position 189 (Asn-189) interacts with GTP. The stretch at 276–342 forms a coiled coil; it reads ETKLRDTAKR…QKKLGKCINL (67 aa).

The protein belongs to the TRAFAC class TrmE-Era-EngA-EngB-Septin-like GTPase superfamily. AIG1/Toc34/Toc159-like paraseptin GTPase family. IAN subfamily. As to expression, mainly expressed in leaves.

The protein is Immune-associated nucleotide-binding protein 9 of Arabidopsis thaliana (Mouse-ear cress).